Consider the following 314-residue polypeptide: Homoserine kinase (314 aa).

97–107 serves as a coordination point for ATP; sequence PPARGMGSSAT.

Belongs to the GHMP kinase family. Homoserine kinase subfamily.

It localises to the cytoplasm. The enzyme catalyses L-homoserine + ATP = O-phospho-L-homoserine + ADP + H(+). It participates in amino-acid biosynthesis; L-threonine biosynthesis; L-threonine from L-aspartate: step 4/5. Its function is as follows. Catalyzes the ATP-dependent phosphorylation of L-homoserine to L-homoserine phosphate. This Synechococcus sp. (strain RCC307) protein is Homoserine kinase.